A 168-amino-acid polypeptide reads, in one-letter code: Peptide deformylase 2 (168 aa).

The Fe cation site is built by C91 and H133. E134 is a catalytic residue. Fe cation is bound at residue H137.

This sequence belongs to the polypeptide deformylase family. Fe(2+) serves as cofactor.

It carries out the reaction N-terminal N-formyl-L-methionyl-[peptide] + H2O = N-terminal L-methionyl-[peptide] + formate. Removes the formyl group from the N-terminal Met of newly synthesized proteins. Requires at least a dipeptide for an efficient rate of reaction. N-terminal L-methionine is a prerequisite for activity but the enzyme has broad specificity at other positions. The polypeptide is Peptide deformylase 2 (Vibrio parahaemolyticus serotype O3:K6 (strain RIMD 2210633)).